The sequence spans 690 residues: Glutamate--cysteine ligase (690 aa).

2 stretches are compositionally biased toward low complexity: residues 574-585 (QQQNGHVNNNNN) and 598-619 (NGSTTTTNGTNSGSGITETNGT). The tract at residues 574 to 620 (QQQNGHVNNNNNNDKKTKNDPIIVNGSTTTTNGTNSGSGITETNGTM) is disordered.

The protein belongs to the glutamate--cysteine ligase type 3 family.

It carries out the reaction L-cysteine + L-glutamate + ATP = gamma-L-glutamyl-L-cysteine + ADP + phosphate + H(+). The protein operates within sulfur metabolism; glutathione biosynthesis; glutathione from L-cysteine and L-glutamate: step 1/2. This is Glutamate--cysteine ligase (GCS1) from Candida albicans (Yeast).